The primary structure comprises 914 residues: Isoleucine--tRNA ligase (914 aa).

The 'HIGH' region signature appears at 57–67 (PYANGQIHMGH). E554 is an L-isoleucyl-5'-AMP binding site. Residues 595-599 (KMSKS) carry the 'KMSKS' region motif. K598 contributes to the ATP binding site. Residues C883, C886, C904, and C907 each coordinate Zn(2+).

The protein belongs to the class-I aminoacyl-tRNA synthetase family. IleS type 1 subfamily. Monomer. The cofactor is Zn(2+).

It localises to the cytoplasm. It carries out the reaction tRNA(Ile) + L-isoleucine + ATP = L-isoleucyl-tRNA(Ile) + AMP + diphosphate. In terms of biological role, catalyzes the attachment of isoleucine to tRNA(Ile). As IleRS can inadvertently accommodate and process structurally similar amino acids such as valine, to avoid such errors it has two additional distinct tRNA(Ile)-dependent editing activities. One activity is designated as 'pretransfer' editing and involves the hydrolysis of activated Val-AMP. The other activity is designated 'posttransfer' editing and involves deacylation of mischarged Val-tRNA(Ile). This chain is Isoleucine--tRNA ligase, found in Macrococcus caseolyticus (strain JCSC5402) (Macrococcoides caseolyticum).